Consider the following 157-residue polypeptide: Stalk-specific protein B (157 aa).

Residues 1–19 (MRSILILLSLLLTIAFASA) form the signal peptide.

It localises to the secreted. This is Stalk-specific protein B (staB) from Dictyostelium discoideum (Social amoeba).